Here is a 350-residue protein sequence, read N- to C-terminus: MRGKVSLEEAFELPKFAAQTKEKAELYIAPNNRDRYFEEILNPCGNRLELSNKHGIGYTIYSIYSPGPQGWTERAECEEYARECNDYISGEIANHKDRMGAFAALSMHDPKQASEELTRCVKELGFLGALVNDVQHAGPEGETHIFYDQPEWDIFWQTCVDLDVPFYLHPEPPFGSYLRNQYEGRKYLIGPPVSFANGVSLHVLGMIVNGVFDRFPKLKVILGHLGEHIPGDFWRIEHWFEHCSRPLAKSRGDVFAEKPLLHYFRNNIWLTTSGNFSTETLKFCVEHVGAERILFSVDSPYEHIDVGCGWYDDNAKAIMEAVGGEKAYKDIGRDNAKKLFKLGKFYDSEA.

This sequence belongs to the metallo-dependent hydrolases superfamily. Homotetramer.

It catalyses the reaction salicylate + H(+) = phenol + CO2. With respect to regulation, inhibited by AgNO(3), HgCl(2), p-chloromercuribenzoic acid and NiCl(2). Reversibly catalyzes the regioselective carboxylation of phenol to form salicylic acid. Involved in a pathway for the degradation of salicylate via phenol. Also catalyzes the decarboxylation of beta-resorcylic acid (2,4-dihydroxybenzoic acid) into resorcinol (1,3-dihydroxybenzene), gamma-resorcylic acid (2,6-dihydroxybenzoic acid) into resorcinol, 2,3-dihydroxybenzoic acid into catechol (1,2-dihydroxybenzene), and 4-aminosalicylic acid into 3-aminophenol. The sequence is that of Salicylate decarboxylase from Cutaneotrichosporon moniliiforme (Yeast).